The following is a 330-amino-acid chain: Small ribosomal subunit protein uS2 (330 aa).

It belongs to the universal ribosomal protein uS2 family.

This chain is Small ribosomal subunit protein uS2, found in Bradyrhizobium sp. (strain BTAi1 / ATCC BAA-1182).